We begin with the raw amino-acid sequence, 720 residues long: MPPPSDIVKVAIEWPGANAQLLEIDQKRPLASIIKEVCDGWSLPNPEYYTLRYADGPQLYITEQTRSDIKNGTILQLAISPSRAARQLMERTQSSSMETRLDAMKELAKLSADVTFATEFINMDGIVVLTRLVESGTKLLSHYSEMLAFTLTAFLELMDHGIVSWDMVSITFIKQIAGYVSQPMVDVSILQRSLAILESMVLNSQSLYQKIAEEITVGQLISHLQVSNQEIQTYAIALINALFLKAPEDKRQDMANAFAQKHLRSIILNHVIRGNRPIKTEMAHQLYVLQVLTFNLLEERMMTKMDPNDQAQRDIIFELRRIAFDADSDPSNAPGSGTEKRKAMYTKDYKMLGFTNHINPAMDFTQTPPGMLALDNMLYLAKVHQDTYIRIVLENSSREDKHECPFGRSAIELTKMLCEILQVGELPNEGRNDYHPMFFTHDRAFEELFGICIQLLNKTWKEMRATAEDFNKVMQVVREQITRALPSKPNSLDQFKSKLRSLSYSEILRLRQSERMSQDDFQSPPIVELREKIQPEILELIKQQRLNRLCEGSSFRKIGNRRRQERFWYCRLALNHKVLHYGDLDDNPQGEVTFESLQEKIPVADIKAIVTGKDCPHMKEKSALKQNKEVLELAFSILYDPDETLNFIAPNKYEYCIWIDGLSALLGKDMSSELTKSDRDTLLSMEMKLRLLDLENIQIPEAPPPVPKEPSSYDFVYHYG.

Tyr-48 carries the phosphotyrosine modification. In terms of domain architecture, ELMO spans 310 to 484; the sequence is QAQRDIIFEL…QVVREQITRA (175 aa). Phosphoserine is present on Ser-503. A PH domain is found at 553-674; that stretch reads SSFRKIGNRR…LLGKDMSSEL (122 aa). The SH3-binding signature appears at 700–707; the sequence is PEAPPPVP. Tyr-717 bears the Phosphotyrosine mark.

In terms of assembly, interacts directly with the SH3-domain of DOCK1 via its SH3-binding site. Probably forms a heterotrimeric complex with DOCK1 and RAC1. Interacts with ARHGEF16, DOCK4 and EPHA2; mediates activation of RAC1 by EPHA2. Interacts with ADGRB3. Interacts with AUTS2; the interaction is direct.

The protein resides in the cytoplasm. The protein localises to the cytosol. Its subcellular location is the membrane. Functionally, involved in cytoskeletal rearrangements required for phagocytosis of apoptotic cells and cell motility. Acts in association with DOCK1 and CRK. Was initially proposed to be required in complex with DOCK1 to activate Rac Rho small GTPases. May enhance the guanine nucleotide exchange factor (GEF) activity of DOCK1. The polypeptide is Engulfment and cell motility protein 2 (ELMO2) (Bos taurus (Bovine)).